The chain runs to 533 residues: Lymphocyte cytosolic protein 2 (533 aa).

Residues 12–78 form the SAM domain; sequence VLAWNSDNLA…SQDINKNEER (67 aa). Residue Tyr-23 is modified to Phosphotyrosine. Disordered stretches follow at residues 78–359 and 374–419; these read RRSI…PLAH and SASL…TPLD. Acidic residues predominate over residues 94–144; sequence ETESHEEDDGGWSSFEDDYESPNDDDPDGEDDGDYESPNEEEQALVDDAAD. The span at 151-172 shows a compositional bias: polar residues; sequence NNEEALQSSILPPNSFHNTNSM. Residues 186–201 are compositionally biased toward pro residues; the sequence is PPVPPLRPKPALPPLP. Phosphoserine is present on residues Ser-207 and Ser-210. A compositionally biased stretch (polar residues) spans 340 to 354; the sequence is NTFPSRSVQPSSKNT. A phosphoserine mark is found at Ser-376 and Ser-410. Over residues 400-411 the composition is skewed to pro residues; that stretch reads LPVPNRPQPPSP. The SH2 domain occupies 422–530; it reads WYVSYITRPE…RYQCTLTHAA (109 aa).

In terms of assembly, interacts with SLA. Interacts with CBLB. Interacts with GRB2. Interacts with SHB. Interacts with PRAM1. Interacts (via SH2 domain) with CD6 (via tyrosine phosphorylated C-terminus). Interacts with FYB1 and the phosphorylated form of FYB2. Interacts with 14-3-3 adapter/YWHAZ; this phosphorylation leads to YWHAZ proteolytic degradation. Interacts with VAV1; this interaction plays a role in TCR-mediated cytokine production. Interacts with AGER; this interaction plays an important role in AGER-mediated pro-inflammatory responses and cytokine release. In terms of processing, phosphorylated after T-cell receptor activation by ZAP70, ITK and TXK, which leads to the up-regulation of Th1 preferred cytokine IL-2. SYK-dependent phosphorylation is required for recruitment of PI3K signaling components. As to expression, highly expressed in spleen, thymus, and peripheral blood leukocytes.

The protein resides in the cytoplasm. Functionally, adapter protein primarily involved in signaling pathways within T-cells, as well as other immune cells such as platelets, mast cells, and natural killer (NK) cells. Plays a crucial role for transducing signal from the T-cell receptor (TCR) after antigen recognition leading to T-cell activation. Mechanistically, once phosphorylated by the kinase ZAP70, mediates interactions with the guanine-nucleotide exchange factor VAV1, the adapter protein NCK and the kinase ITK. In turn, stimulates the activation of PKC-theta/PRKCQ and NF-kappa-B transcriptional activity in response to CD3 and CD28 costimulation. Also plays an essential role in AGER-induced signaling pathways including p38 MAPK and ERK1/2 activation leading to cytokine release and pro-inflammatory responses. This is Lymphocyte cytosolic protein 2 (Lcp2) from Mus musculus (Mouse).